We begin with the raw amino-acid sequence, 37 residues long: Large ribosomal subunit protein bL36 (37 aa).

Belongs to the bacterial ribosomal protein bL36 family.

The protein is Large ribosomal subunit protein bL36 of Clostridium kluyveri (strain NBRC 12016).